A 42-amino-acid chain; its full sequence is uncharacterized protein (42 aa).

Residues 15 to 37 (PLILAVDCAIIIPNTNFIHSFLI) form a helical membrane-spanning segment.

It is found in the membrane. This is an uncharacterized protein from Dictyostelium discoideum (Social amoeba).